The following is a 258-amino-acid chain: Synapse differentiation-inducing gene protein 1 (258 aa).

The Cytoplasmic segment spans residues 1 to 181 (MAGVVEQKSG…NFLVMPPRDH (181 aa)). Position 137 is a phosphoserine (S137). The chain crosses the membrane as a helical span at residues 182–202 (LGLSVFSMLCCFWPLGIAAFY). Over 203–228 (LSHETNKAVAKGDFHQASTSSRRALF) the chain is Extracellular. Positions 229–249 (LAVLSITIGTGIYVGVAVALI) form an intramembrane region, helical. Residues 250–258 (AYLSKSNHL) are Extracellular-facing.

This sequence belongs to the CD225/Dispanin family. As to quaternary structure, homodimer. Interacts with GRIA1 and GRIA2.

Its subcellular location is the cell membrane. The protein localises to the early endosome membrane. It is found in the postsynaptic density membrane. It localises to the synapse. The protein resides in the cell projection. Its subcellular location is the dendrite. The protein localises to the dendritic spine. Functionally, may regulate AMPA receptor content at nascent synapses, and have a role in postsynaptic development and maturation. The sequence is that of Synapse differentiation-inducing gene protein 1 (SYNDIG1) from Bos taurus (Bovine).